We begin with the raw amino-acid sequence, 890 residues long: DNA mismatch repair protein MutS (890 aa).

634–641 (GPNMGGKS) is a binding site for ATP.

The protein belongs to the DNA mismatch repair MutS family.

In terms of biological role, this protein is involved in the repair of mismatches in DNA. It is possible that it carries out the mismatch recognition step. This protein has a weak ATPase activity. This is DNA mismatch repair protein MutS from Burkholderia pseudomallei (strain 1710b).